We begin with the raw amino-acid sequence, 92 residues long: Small ribosomal subunit protein uS19 (92 aa).

The protein belongs to the universal ribosomal protein uS19 family.

Functionally, protein S19 forms a complex with S13 that binds strongly to the 16S ribosomal RNA. The sequence is that of Small ribosomal subunit protein uS19 from Psychromonas ingrahamii (strain DSM 17664 / CCUG 51855 / 37).